Here is a 462-residue protein sequence, read N- to C-terminus: ATP synthase subunit beta (462 aa).

150-157 contributes to the ATP binding site; sequence GGAGVGKT.

It belongs to the ATPase alpha/beta chains family. As to quaternary structure, F-type ATPases have 2 components, CF(1) - the catalytic core - and CF(0) - the membrane proton channel. CF(1) has five subunits: alpha(3), beta(3), gamma(1), delta(1), epsilon(1). CF(0) has three main subunits: a(1), b(2) and c(9-12). The alpha and beta chains form an alternating ring which encloses part of the gamma chain. CF(1) is attached to CF(0) by a central stalk formed by the gamma and epsilon chains, while a peripheral stalk is formed by the delta and b chains. In this bacterium the a and b subunits are transcribed but do not seem to be translated, thus the ATP synthase consists of the alpha, beta, gamma, delta, epsilon and c subunits.

The protein localises to the cell membrane. It carries out the reaction ATP + H2O + 4 H(+)(in) = ADP + phosphate + 5 H(+)(out). In terms of biological role, produces ATP from ADP in the presence of a proton gradient across the membrane. The catalytic sites are hosted primarily by the beta subunits. The sequence is that of ATP synthase subunit beta from Moorella thermoacetica (strain ATCC 39073 / JCM 9320).